Reading from the N-terminus, the 163-residue chain is MASEHSFDISAALDKQELKNAFEQAKKELDSRYDLKGIKCEIDLSEKESIFKLSSSSEGKLDVLKDIVISKLIKRGINPKAIKELSRESGAMFRLNLKANDAIDSENAKKINKVIKDSKLKVNSSIRGEEIRVAAKQIDDLQAVMKLVKELDLELNISFKNLK.

The protein belongs to the YajQ family.

In terms of biological role, nucleotide-binding protein. In Campylobacter jejuni subsp. jejuni serotype O:2 (strain ATCC 700819 / NCTC 11168), this protein is Nucleotide-binding protein Cj0374.